A 139-amino-acid chain; its full sequence is Small ribosomal subunit protein uS12 (139 aa).

Residues 1–44 form a disordered region; sequence MPTINQLVRKPRQSKITKSKSPALNKGYNSFKKSLTDVKSPQKR. Over residues 9–18 the composition is skewed to basic residues; it reads RKPRQSKITK. Polar residues predominate over residues 19–39; the sequence is SKSPALNKGYNSFKKSLTDVK. Position 102 is a 3-methylthioaspartic acid (Asp-102).

It belongs to the universal ribosomal protein uS12 family. Part of the 30S ribosomal subunit. Contacts proteins S8 and S17. May interact with IF1 in the 30S initiation complex.

In terms of biological role, with S4 and S5 plays an important role in translational accuracy. Functionally, interacts with and stabilizes bases of the 16S rRNA that are involved in tRNA selection in the A site and with the mRNA backbone. Located at the interface of the 30S and 50S subunits, it traverses the body of the 30S subunit contacting proteins on the other side and probably holding the rRNA structure together. The combined cluster of proteins S8, S12 and S17 appears to hold together the shoulder and platform of the 30S subunit. This Lysinibacillus sphaericus (strain C3-41) protein is Small ribosomal subunit protein uS12.